Consider the following 215-residue polypeptide: MSIIGSFPPGGPRVEVQETRVQTDRVLTIPNILSMARLAGVPLFLWLILRPEFGGPQSDGWALLVLALSGVSDYLDGKLARRWNQISSLGRLLDPAADRLYILSTLVGLTWREILPLWLTLVLLAREAMLLVMVGILRRHGYPPPQVNFLGKAATFNLMYAFPLLLLSDGSGWIASLAAVFGWAFAGWGTTLYWWAGVLYVVQVRRLVRADVAAD.

Transmembrane regions (helical) follow at residues 29 to 49 (IPNILSMARLAGVPLFLWLIL), 60 to 80 (GWALLVLALSGVSDYLDGKLA), 117 to 137 (LWLTLVLLAREAMLLVMVGIL), 158 to 178 (LMYAFPLLLLSDGSGWIASLA), and 179 to 199 (AVFGWAFAGWGTTLYWWAGVL).

Belongs to the CDP-alcohol phosphatidyltransferase class-I family. A divalent metal cation is required as a cofactor.

It localises to the cell membrane. It catalyses the reaction a CDP-1,2-diacyl-sn-glycerol + a 1,2-diacyl-sn-glycero-3-phospho-(1'-sn-glycerol) = a cardiolipin + CMP + H(+). Catalyzes the synthesis of cardiolipin (CL) (diphosphatidylglycerol) by specifically transferring a phosphatidyl group from CDP-diacylglycerol to phosphatidylglycerol (PG). The sequence is that of Cardiolipin synthase (CMP-forming) from Streptomyces coelicolor (strain ATCC BAA-471 / A3(2) / M145).